Here is a 519-residue protein sequence, read N- to C-terminus: Ent-kaurene oxidase (519 aa).

At 1 to 10 (MDTLLSLQAV) the chain is on the chloroplast intermembrane side. Residues 11–31 (PAAAAIGGPVVAIGGITLFFI) traverse the membrane as a helical segment. Topologically, residues 32–519 (REYVKDQRKK…PRLRDRVCVS (488 aa)) are cytoplasmic. Residue cysteine 458 coordinates heme.

The protein belongs to the cytochrome P450 family. The cofactor is heme.

Its subcellular location is the plastid. It localises to the chloroplast outer membrane. It catalyses the reaction ent-kaur-16-ene + 3 reduced [NADPH--hemoprotein reductase] + 3 O2 = ent-kaur-16-en-19-oate + 3 oxidized [NADPH--hemoprotein reductase] + 4 H2O + 4 H(+). It functions in the pathway plant hormone biosynthesis; gibberellin biosynthesis. Its function is as follows. Catalyzes three successive oxidations of the 4-methyl group of ent-kaurene giving kaurenoic acid, a key step in gibberellins (GAs) biosynthesis. GAs, which are involved many processes, including stem elongation, play a central role in plant development. In Salvia miltiorrhiza (Chinese sage), this protein is Ent-kaurene oxidase.